The primary structure comprises 434 residues: GTPase Obg (434 aa).

An Obg domain is found at 1-158 (MFLDTAKIKV…RELQLELKIL (158 aa)). One can recognise an OBG-type G domain in the interval 159-336 (ADVGLVGFPS…LLDATAELLD (178 aa)). Residues 165 to 172 (GFPSVGKS), 190 to 194 (FTTIV), 212 to 215 (DLPG), 282 to 285 (NKMD), and 317 to 319 (SGL) contribute to the GTP site. S172 and T192 together coordinate Mg(2+). Residues 356-434 (GFDEEEKAFE…IGKFEFEFVD (79 aa)) form the OCT domain.

It belongs to the TRAFAC class OBG-HflX-like GTPase superfamily. OBG GTPase family. In terms of assembly, monomer. Requires Mg(2+) as cofactor.

It localises to the cytoplasm. Functionally, an essential GTPase which binds GTP, GDP and possibly (p)ppGpp with moderate affinity, with high nucleotide exchange rates and a fairly low GTP hydrolysis rate. Plays a role in control of the cell cycle, stress response, ribosome biogenesis and in those bacteria that undergo differentiation, in morphogenesis control. The polypeptide is GTPase Obg (Streptococcus pneumoniae (strain Hungary19A-6)).